An 81-amino-acid polypeptide reads, in one-letter code: Adipogenin (81 aa).

Residues Phe-16–Leu-36 form a helical membrane-spanning segment.

It belongs to the adipogenin family.

It is found in the membrane. Its subcellular location is the nucleus. Its function is as follows. Plays a role in stimulating adipocyte differentiation and development. The protein is Adipogenin of Sus scrofa (Pig).